The following is a 339-amino-acid chain: Holliday junction branch migration complex subunit RuvB (339 aa).

The disordered stretch occupies residues 1–22; the sequence is MIDADPTLRPEPLPEDNDRALR. The segment at 1 to 182 is large ATPase domain (RuvB-L); sequence MIDADPTLRP…FGIPTRLQFY (182 aa). ATP contacts are provided by residues L21, R22, G63, K66, T67, T68, 129–131, R172, Y182, and R219; that span reads EDF. T67 contacts Mg(2+). The segment at 183–253 is small ATPAse domain (RuvB-S); sequence TIDELFEIVS…LADGALTRLG (71 aa). Residues 256 to 339 form a head domain (RuvB-H) region; that stretch reads QLGLDGADRR…PPKSQSDLFG (84 aa). R292, R311, and R316 together coordinate DNA.

Belongs to the RuvB family. In terms of assembly, homohexamer. Forms an RuvA(8)-RuvB(12)-Holliday junction (HJ) complex. HJ DNA is sandwiched between 2 RuvA tetramers; dsDNA enters through RuvA and exits via RuvB. An RuvB hexamer assembles on each DNA strand where it exits the tetramer. Each RuvB hexamer is contacted by two RuvA subunits (via domain III) on 2 adjacent RuvB subunits; this complex drives branch migration. In the full resolvosome a probable DNA-RuvA(4)-RuvB(12)-RuvC(2) complex forms which resolves the HJ.

Its subcellular location is the cytoplasm. The catalysed reaction is ATP + H2O = ADP + phosphate + H(+). The RuvA-RuvB-RuvC complex processes Holliday junction (HJ) DNA during genetic recombination and DNA repair, while the RuvA-RuvB complex plays an important role in the rescue of blocked DNA replication forks via replication fork reversal (RFR). RuvA specifically binds to HJ cruciform DNA, conferring on it an open structure. The RuvB hexamer acts as an ATP-dependent pump, pulling dsDNA into and through the RuvAB complex. RuvB forms 2 homohexamers on either side of HJ DNA bound by 1 or 2 RuvA tetramers; 4 subunits per hexamer contact DNA at a time. Coordinated motions by a converter formed by DNA-disengaged RuvB subunits stimulates ATP hydrolysis and nucleotide exchange. Immobilization of the converter enables RuvB to convert the ATP-contained energy into a lever motion, pulling 2 nucleotides of DNA out of the RuvA tetramer per ATP hydrolyzed, thus driving DNA branch migration. The RuvB motors rotate together with the DNA substrate, which together with the progressing nucleotide cycle form the mechanistic basis for DNA recombination by continuous HJ branch migration. Branch migration allows RuvC to scan DNA until it finds its consensus sequence, where it cleaves and resolves cruciform DNA. This Ruegeria sp. (strain TM1040) (Silicibacter sp.) protein is Holliday junction branch migration complex subunit RuvB.